The primary structure comprises 105 residues: Serine protease inhibitor Kazal-type 6 (105 aa).

The first 23 residues, 1 to 23 (MKVAGVFLLLSLALLCFFSGAFS), serve as a signal peptide directing secretion. Pyrrolidone carboxylic acid is present on Q24. Residues 49–105 (RLFQINCGEFRDPKVFCTRESDPLCGSDGQTYGNKCAFCKALEKSSGKINLKHRGKC) form the Kazal-like domain. Cystine bridges form between C55–C87, C65–C84, and C73–C105.

As to expression, expressed in the upper epidermis and in skin appendages.

It localises to the secreted. Functionally, serine protease inhibitor selective for kallikreins. Efficiently inhibits KLK5 and human KLK2, KLK4, KLK5, KLK6, KLK7, KLK12, KLK13 and KLK14. Doesn't inhibit human KLK1 and KLK8. The sequence is that of Serine protease inhibitor Kazal-type 6 (Spink6) from Mus musculus (Mouse).